The primary structure comprises 296 residues: uncharacterized protein (296 aa).

Positions Met-1–Phe-95 constitute an FAD-binding FR-type domain.

This is an uncharacterized protein from Clostridium beijerinckii (Clostridium MP).